Consider the following 6919-residue polypeptide: Nonribosomal peptide synthetase easA (6919 aa).

The Carrier 1 domain maps to 17–93 (TNNEVVEKDI…ELCQSVKLAE (77 aa)). Residue Ser-54 is modified to O-(pantetheine 4'-phosphoryl)serine. The interval 123 to 427 (EAQKLYASTK…FLRKVKDTRM (305 aa)) is epimerization 1. Positions 294-319 (FRRSTPVESTNDERNTNERQHNRHQN) are disordered. The segment covering 304-319 (NDERNTNERQHNRHQN) has biased composition (basic and acidic residues). The segment at 604–981 (LNVELDCGRL…ISTTQEINQL (378 aa)) is condensation 1. Residues 1003–1394 (QRLRRPDAWA…GRRDTQIKVR (392 aa)) form an adenylation 1 region. One can recognise a Carrier 2 domain in the interval 1531-1608 (EPETLLERQV…QLAQTAEVKD (78 aa)). Ser-1569 carries the O-(pantetheine 4'-phosphoryl)serine modification. The epimerization 2 stretch occupies residues 1617–2031 (LLSPMQKWYF…ANAISALGTE (415 aa)). Residues 2072 to 2509 (VEDIYPCSPI…VGQLNTVTPK (438 aa)) form a condensation 2 region. Residues 2541–2930 (RPNATAVCAW…ARKDSQVKVR (390 aa)) are adenylation 2. One can recognise a Carrier 3 domain in the interval 3067–3143 (APSTFMEKKL…EMAAHLEAQM (77 aa)). At Ser-3104 the chain carries O-(pantetheine 4'-phosphoryl)serine. The tract at residues 3188–3599 (EDVYPCTPLQ…LLSKDEARRL (412 aa)) is condensation 3. The segment at 3620–4018 (QHVSTNPYAP…GRRDGQVKIR (399 aa)) is adenylation 3. Positions 4151 to 4228 (TPSTSEEKNI…QLAKKAVIKT (78 aa)) constitute a Carrier 4 domain. Ser-4188 carries the O-(pantetheine 4'-phosphoryl)serine modification. The tract at residues 4282–4708 (ESIYYCSPIQ…EIDVIPTGDV (427 aa)) is condensation 4. Residues 4732 to 5133 (EQALSQPGAQ…GRADGQIKIR (402 aa)) form an adenylation 4 region. A Carrier 5 domain is found at 5260–5337 (ALSTETERRL…DMANTIANSE (78 aa)). An O-(pantetheine 4'-phosphoryl)serine modification is found at Ser-5296. Residues 5380-5775 (EDAYPCTPLQ…VFGQLQSAAN (396 aa)) are condensation 5. The interval 5824 to 6216 (SCPDAQAVHA…IGRRDTQVKI (393 aa)) is adenylation 5. Positions 6344–6421 (EPATVTERLL…DMATLIDRKT (78 aa)) constitute a Carrier 6 domain. Ser-6381 is modified (O-(pantetheine 4'-phosphoryl)serine).

It participates in antibiotic biosynthesis. Functionally, nonribosomal peptide synthetase; part of the gene cluster that mediates the biosynthesis of emericellamides, secondary metabolites acting as antibiotics. The biosynthesis of emericellamides initiates from the highly reducing polyketide synthase easB which catalyzes the formation of the linear polyketide chain. EasB produces several polyketides that can be further processed by the downstream enzymes. The polyketides are released from easB as linear polyketide carboxylic acids, which are converted to CoA thioesters by the acyl-CoA ligase easD. The substrates are then loaded onto the acyltransferase easC, which shuttles them to the first thiolation (T) domain of the nonribosomal peptide synthetase easA. EasA then performs condensation of the polyketides with one glycine, two alanine, one valine and one leucine residues. A last step of cyclization leads to the production of emericellamides. The protein is Nonribosomal peptide synthetase easA of Emericella nidulans (strain FGSC A4 / ATCC 38163 / CBS 112.46 / NRRL 194 / M139) (Aspergillus nidulans).